The chain runs to 232 residues: 7-cyano-7-deazaguanine synthase (232 aa).

Position 7–17 (7–17 (CSGGLDSVSLA)) interacts with ATP. Cys-185, Cys-193, Cys-196, and Cys-199 together coordinate Zn(2+).

Belongs to the QueC family. The cofactor is Zn(2+).

The catalysed reaction is 7-carboxy-7-deazaguanine + NH4(+) + ATP = 7-cyano-7-deazaguanine + ADP + phosphate + H2O + H(+). Its pathway is purine metabolism; 7-cyano-7-deazaguanine biosynthesis. Catalyzes the ATP-dependent conversion of 7-carboxy-7-deazaguanine (CDG) to 7-cyano-7-deazaguanine (preQ(0)). This Brucella canis (strain ATCC 23365 / NCTC 10854 / RM-666) protein is 7-cyano-7-deazaguanine synthase.